Here is a 339-residue protein sequence, read N- to C-terminus: Cathepsin B (339 aa).

The N-terminal stretch at 1-17 (MWWLWASLCCLLALGDA) is a signal peptide. Residues 18–79 (RSRPSFHPLS…QRVMFTEDLK (62 aa)) constitute a propeptide, activation peptide. Cystine bridges form between Cys-93–Cys-122, Cys-105–Cys-150, Cys-141–Cys-207, Cys-142–Cys-146, Cys-179–Cys-211, and Cys-187–Cys-198. Cys-108 is an active-site residue. Residue Asn-192 is glycosylated (N-linked (GlcNAc...) asparagine). Position 220 is an N6-acetyllysine (Lys-220). Active-site residues include His-278 and Asn-298. The propeptide occupies 334–339 (QYWEKI).

It belongs to the peptidase C1 family. As to quaternary structure, dimer of a heavy chain and a light chain cross-linked by a disulfide bond. Interacts with SRPX2. Directly interacts with SHKBP1.

It is found in the lysosome. The protein localises to the melanosome. Its subcellular location is the secreted. It localises to the extracellular space. The protein resides in the apical cell membrane. The catalysed reaction is Hydrolysis of proteins with broad specificity for peptide bonds. Preferentially cleaves -Arg-Arg-|-Xaa bonds in small molecule substrates (thus differing from cathepsin L). In addition to being an endopeptidase, shows peptidyl-dipeptidase activity, liberating C-terminal dipeptides.. Thiol protease which is believed to participate in intracellular degradation and turnover of proteins. Cleaves matrix extracellular phosphoglycoprotein MEPE. Involved in the solubilization of cross-linked TG/thyroglobulin in the thyroid follicle lumen. Has also been implicated in tumor invasion and metastasis. This is Cathepsin B (CTSB) from Macaca fascicularis (Crab-eating macaque).